The sequence spans 490 residues: Cytochrome P450 71B29 (490 aa).

A helical membrane pass occupies residues 1–21 (MAIILCFLILLPLILIFLKKL). Cys-440 serves as a coordination point for heme.

This sequence belongs to the cytochrome P450 family. The cofactor is heme.

The protein localises to the membrane. This chain is Cytochrome P450 71B29 (CYP71B29), found in Arabidopsis thaliana (Mouse-ear cress).